We begin with the raw amino-acid sequence, 163 residues long: Putative pre-16S rRNA nuclease (163 aa).

The protein belongs to the YqgF nuclease family.

It is found in the cytoplasm. Functionally, could be a nuclease involved in processing of the 5'-end of pre-16S rRNA. In Rhodopseudomonas palustris (strain BisA53), this protein is Putative pre-16S rRNA nuclease.